The chain runs to 730 residues: Guanylate cyclase soluble subunit alpha-2 (730 aa).

The disordered stretch occupies residues 1–53 (MSRRKISSESFSSLGSDYLETSPEEEGECPLSKLCWNGSRSPPGPPGSRAAAM). The 128-residue stretch at 519 to 646 (TMLFSDIVGF…NNVTLASKFE (128 aa)) folds into the Guanylate cyclase domain.

The protein belongs to the adenylyl cyclase class-4/guanylyl cyclase family. In terms of assembly, heterodimer of an alpha and a beta chain.

It localises to the cytoplasm. It catalyses the reaction GTP = 3',5'-cyclic GMP + diphosphate. Activated by nitric oxide in the presence of magnesium or manganese ions. Its function is as follows. Has guanylyl cyclase on binding to the beta-1 subunit. The chain is Guanylate cyclase soluble subunit alpha-2 (Gucy1a2) from Rattus norvegicus (Rat).